We begin with the raw amino-acid sequence, 523 residues long: Anthranilate synthase component 1 (523 aa).

L-tryptophan is bound by residues serine 45 and 296–298; that span reads PYM. Position 333–334 (333–334) interacts with chorismate; sequence GT. Glutamate 366 is a Mg(2+) binding site. Chorismate is bound by residues tyrosine 454, arginine 474, 488 to 490, and glycine 490; that span reads GAG. Glutamate 503 lines the Mg(2+) pocket.

Belongs to the anthranilate synthase component I family. In terms of assembly, heterotetramer consisting of two non-identical subunits: a beta subunit (TrpG) and a large alpha subunit (TrpE). It depends on Mg(2+) as a cofactor.

It catalyses the reaction chorismate + L-glutamine = anthranilate + pyruvate + L-glutamate + H(+). The protein operates within amino-acid biosynthesis; L-tryptophan biosynthesis; L-tryptophan from chorismate: step 1/5. Feedback inhibited by tryptophan. Functionally, part of a heterotetrameric complex that catalyzes the two-step biosynthesis of anthranilate, an intermediate in the biosynthesis of L-tryptophan. In the first step, the glutamine-binding beta subunit (TrpG) of anthranilate synthase (AS) provides the glutamine amidotransferase activity which generates ammonia as a substrate that, along with chorismate, is used in the second step, catalyzed by the large alpha subunit of AS (TrpE) to produce anthranilate. In the absence of TrpG, TrpE can synthesize anthranilate directly from chorismate and high concentrations of ammonia. This chain is Anthranilate synthase component 1 (trpE), found in Vibrio cholerae serotype O1 (strain ATCC 39315 / El Tor Inaba N16961).